Reading from the N-terminus, the 164-residue chain is UPF0225 protein Shewmr7_1921 (164 aa).

It belongs to the UPF0225 family.

This is UPF0225 protein Shewmr7_1921 from Shewanella sp. (strain MR-7).